A 310-amino-acid chain; its full sequence is Lipoyl synthase (310 aa).

[4Fe-4S] cluster-binding residues include Cys-45, Cys-50, Cys-56, Cys-71, Cys-75, Cys-78, and Ser-285. The 218-residue stretch at Trp-57 to Leu-274 folds into the Radical SAM core domain.

This sequence belongs to the radical SAM superfamily. Lipoyl synthase family. Requires [4Fe-4S] cluster as cofactor.

The protein localises to the cytoplasm. The enzyme catalyses [[Fe-S] cluster scaffold protein carrying a second [4Fe-4S](2+) cluster] + N(6)-octanoyl-L-lysyl-[protein] + 2 oxidized [2Fe-2S]-[ferredoxin] + 2 S-adenosyl-L-methionine + 4 H(+) = [[Fe-S] cluster scaffold protein] + N(6)-[(R)-dihydrolipoyl]-L-lysyl-[protein] + 4 Fe(3+) + 2 hydrogen sulfide + 2 5'-deoxyadenosine + 2 L-methionine + 2 reduced [2Fe-2S]-[ferredoxin]. Its pathway is protein modification; protein lipoylation via endogenous pathway; protein N(6)-(lipoyl)lysine from octanoyl-[acyl-carrier-protein]: step 2/2. Functionally, catalyzes the radical-mediated insertion of two sulfur atoms into the C-6 and C-8 positions of the octanoyl moiety bound to the lipoyl domains of lipoate-dependent enzymes, thereby converting the octanoylated domains into lipoylated derivatives. The chain is Lipoyl synthase from Novosphingobium aromaticivorans (strain ATCC 700278 / DSM 12444 / CCUG 56034 / CIP 105152 / NBRC 16084 / F199).